We begin with the raw amino-acid sequence, 777 residues long: DNA ligase (777 aa).

NAD(+) contacts are provided by residues 35-39 (DAEYD), 84-85 (SL), and Glu-116. Residue Lys-118 is the N6-AMP-lysine intermediate of the active site. Residues Arg-139, Glu-176, Lys-293, and Lys-317 each coordinate NAD(+). Zn(2+) is bound by residues Cys-411, Cys-414, Cys-429, and Cys-435. The 87-residue stretch at 691-777 (MESQPLEGQT…NQHGIDPGAL (87 aa)) folds into the BRCT domain.

It belongs to the NAD-dependent DNA ligase family. LigA subfamily. Mg(2+) serves as cofactor. Requires Mn(2+) as cofactor.

The catalysed reaction is NAD(+) + (deoxyribonucleotide)n-3'-hydroxyl + 5'-phospho-(deoxyribonucleotide)m = (deoxyribonucleotide)n+m + AMP + beta-nicotinamide D-nucleotide.. Functionally, DNA ligase that catalyzes the formation of phosphodiester linkages between 5'-phosphoryl and 3'-hydroxyl groups in double-stranded DNA using NAD as a coenzyme and as the energy source for the reaction. It is essential for DNA replication and repair of damaged DNA. This Alcanivorax borkumensis (strain ATCC 700651 / DSM 11573 / NCIMB 13689 / SK2) protein is DNA ligase.